The chain runs to 1001 residues: TonB-dependent receptor P3 (1001 aa).

Residues methionine 1–alanine 26 form the signal peptide. Positions glutamate 109–tyrosine 116 match the TonB box motif. Residues lysine 120–lysine 232 form the TBDR plug domain. One can recognise a TBDR beta-barrel domain in the interval lysine 238 to phenylalanine 1001. Residues tyrosine 984 to phenylalanine 1001 carry the TonB C-terminal box motif.

This sequence belongs to the TonB-dependent receptor family.

The protein localises to the cell outer membrane. Its function is as follows. TonB-dependent receptor probably involved in ulvan degradation. Ulvan is the main polysaccharide component of the Ulvales (green seaweed) cell wall. It is composed of disaccharide building blocks comprising 3-sulfated rhamnose (Rha3S) linked to D-glucuronic acid (GlcA), L-iduronic acid (IduA), or D-xylose (Xyl). The TonB-dependent receptor may mediate transport of ulvan oligosaccharides from the surface of the outer membrane to the periplasm for subsequent degradation. In Formosa agariphila (strain DSM 15362 / KCTC 12365 / LMG 23005 / KMM 3901 / M-2Alg 35-1), this protein is TonB-dependent receptor P3.